Here is a 364-residue protein sequence, read N- to C-terminus: UDP-N-acetylglucosamine--N-acetylmuramyl-(pentapeptide) pyrophosphoryl-undecaprenol N-acetylglucosamine transferase (364 aa).

UDP-N-acetyl-alpha-D-glucosamine is bound by residues 10-12, Asn-126, Arg-167, Ser-199, Ile-253, and Gln-298; that span reads TGG.

This sequence belongs to the glycosyltransferase 28 family. MurG subfamily.

The protein localises to the cell inner membrane. The enzyme catalyses di-trans,octa-cis-undecaprenyl diphospho-N-acetyl-alpha-D-muramoyl-L-alanyl-D-glutamyl-meso-2,6-diaminopimeloyl-D-alanyl-D-alanine + UDP-N-acetyl-alpha-D-glucosamine = di-trans,octa-cis-undecaprenyl diphospho-[N-acetyl-alpha-D-glucosaminyl-(1-&gt;4)]-N-acetyl-alpha-D-muramoyl-L-alanyl-D-glutamyl-meso-2,6-diaminopimeloyl-D-alanyl-D-alanine + UDP + H(+). It participates in cell wall biogenesis; peptidoglycan biosynthesis. Cell wall formation. Catalyzes the transfer of a GlcNAc subunit on undecaprenyl-pyrophosphoryl-MurNAc-pentapeptide (lipid intermediate I) to form undecaprenyl-pyrophosphoryl-MurNAc-(pentapeptide)GlcNAc (lipid intermediate II). The sequence is that of UDP-N-acetylglucosamine--N-acetylmuramyl-(pentapeptide) pyrophosphoryl-undecaprenol N-acetylglucosamine transferase from Amoebophilus asiaticus (strain 5a2).